A 108-amino-acid polypeptide reads, in one-letter code: Evasin P1156 (108 aa).

An N-terminal signal peptide occupies residues 1–28; that stretch reads MEVKTYAFLQIAVFIFLGMQIFASLTDA. Disulfide bonds link cysteine 41–cysteine 63, cysteine 45–cysteine 65, and cysteine 56–cysteine 76. N-linked (GlcNAc...) asparagine glycosylation is present at asparagine 44. The segment at 89 to 108 is disordered; the sequence is NPSDSEIEAAKPKRSDTLSH. Residues 96–108 are compositionally biased toward basic and acidic residues; it reads EAAKPKRSDTLSH.

The protein localises to the secreted. Its function is as follows. Salivary chemokine-binding protein which has chemokine-neutralizing activity and binds to host chemokines CXCL1, CXCL2, CXCL3, CXCL5, CXCL6 and CXCL8. The polypeptide is Evasin P1156 (Ixodes ricinus (Common tick)).